The following is a 545-amino-acid chain: Phenylalanine--tRNA ligase beta subunit (545 aa).

The B5 domain maps to 270-346 (LEPKERLLTT…KGYGYENIKV (77 aa)). The Mg(2+) site is built by Asp-324, Asp-330, Glu-333, and Asp-334.

It belongs to the phenylalanyl-tRNA synthetase beta subunit family. Type 2 subfamily. Tetramer of two alpha and two beta subunits. Requires Mg(2+) as cofactor.

The protein resides in the cytoplasm. The enzyme catalyses tRNA(Phe) + L-phenylalanine + ATP = L-phenylalanyl-tRNA(Phe) + AMP + diphosphate + H(+). The chain is Phenylalanine--tRNA ligase beta subunit from Methanosarcina acetivorans (strain ATCC 35395 / DSM 2834 / JCM 12185 / C2A).